Here is a 338-residue protein sequence, read N- to C-terminus: Ketol-acid reductoisomerase (NADP(+)) (338 aa).

The KARI N-terminal Rossmann domain maps to 1 to 181; that stretch reads MKVFYDKDCD…GGGKAGIIET (181 aa). NADP(+) contacts are provided by residues 24 to 27, Arg47, and Ser52; that span reads YGSQ. Residue His107 is part of the active site. Gly133 contributes to the NADP(+) binding site. The KARI C-terminal knotted domain maps to 182–327; that stretch reads NFREETETDL…EKLRAMMPWI (146 aa). Positions 190, 194, 226, and 230 each coordinate Mg(2+). Ser251 serves as a coordination point for substrate.

This sequence belongs to the ketol-acid reductoisomerase family. Mg(2+) serves as cofactor.

The enzyme catalyses (2R)-2,3-dihydroxy-3-methylbutanoate + NADP(+) = (2S)-2-acetolactate + NADPH + H(+). The catalysed reaction is (2R,3R)-2,3-dihydroxy-3-methylpentanoate + NADP(+) = (S)-2-ethyl-2-hydroxy-3-oxobutanoate + NADPH + H(+). The protein operates within amino-acid biosynthesis; L-isoleucine biosynthesis; L-isoleucine from 2-oxobutanoate: step 2/4. Its pathway is amino-acid biosynthesis; L-valine biosynthesis; L-valine from pyruvate: step 2/4. In terms of biological role, involved in the biosynthesis of branched-chain amino acids (BCAA). Catalyzes an alkyl-migration followed by a ketol-acid reduction of (S)-2-acetolactate (S2AL) to yield (R)-2,3-dihydroxy-isovalerate. In the isomerase reaction, S2AL is rearranged via a Mg-dependent methyl migration to produce 3-hydroxy-3-methyl-2-ketobutyrate (HMKB). In the reductase reaction, this 2-ketoacid undergoes a metal-dependent reduction by NADPH to yield (R)-2,3-dihydroxy-isovalerate. The polypeptide is Ketol-acid reductoisomerase (NADP(+)) (Polaromonas sp. (strain JS666 / ATCC BAA-500)).